The primary structure comprises 435 residues: Nematode resistance protein-like HSPRO2 (435 aa).

In terms of assembly, interacts with SNF4.

The protein resides in the cytoplasm. In terms of biological role, positive regulator of basal resistance. This is Nematode resistance protein-like HSPRO2 (HSPRO2) from Arabidopsis thaliana (Mouse-ear cress).